Consider the following 94-residue polypeptide: DNA-directed RNA polymerase subunit omega (94 aa).

The protein belongs to the RNA polymerase subunit omega family. As to quaternary structure, the RNAP catalytic core consists of 2 alpha, 1 beta, 1 beta' and 1 omega subunit. When a sigma factor is associated with the core the holoenzyme is formed, which can initiate transcription.

The enzyme catalyses RNA(n) + a ribonucleoside 5'-triphosphate = RNA(n+1) + diphosphate. Promotes RNA polymerase assembly. Latches the N- and C-terminal regions of the beta' subunit thereby facilitating its interaction with the beta and alpha subunits. This is DNA-directed RNA polymerase subunit omega from Tolumonas auensis (strain DSM 9187 / NBRC 110442 / TA 4).